The chain runs to 25 residues: DFPIANGERQSPVDIDTKAVVQDPA.

In terms of domain architecture, Alpha-carbonic anhydrase spans 1 to 25; sequence DFPIANGERQSPVDIDTKAVVQDPA. The segment at 1–25 is disordered; sequence DFPIANGERQSPVDIDTKAVVQDPA.

It belongs to the alpha-carbonic anhydrase family. The cofactor is Zn(2+).

Its function is as follows. Releases silica from silica-rich substances. The chain is Bioremediase from Thermoanaerobacter sp.